Reading from the N-terminus, the 597-residue chain is Probable translation initiation factor IF-2 (597 aa).

One can recognise a tr-type G domain in the interval 4–221 (IRQPIIAVLG…LIAGLSQKYL (218 aa)). Positions 13–20 (GHVDHGKT) are G1. 13 to 20 (GHVDHGKT) contacts GTP. The interval 38–42 (GITQH) is G2. The tract at residues 77–80 (DTPG) is G3. Residues 77-81 (DTPGH) and 131-134 (NKID) contribute to the GTP site. The interval 131–134 (NKID) is G4. Residues 199–201 (SAK) are G5.

Belongs to the TRAFAC class translation factor GTPase superfamily. Classic translation factor GTPase family. IF-2 subfamily.

In terms of biological role, function in general translation initiation by promoting the binding of the formylmethionine-tRNA to ribosomes. Seems to function along with eIF-2. In Thermococcus onnurineus (strain NA1), this protein is Probable translation initiation factor IF-2.